A 313-amino-acid chain; its full sequence is Porphobilinogen deaminase (313 aa).

At C242 the chain carries S-(dipyrrolylmethanemethyl)cysteine.

The protein belongs to the HMBS family. In terms of assembly, monomer. Dipyrromethane serves as cofactor.

It catalyses the reaction 4 porphobilinogen + H2O = hydroxymethylbilane + 4 NH4(+). It participates in porphyrin-containing compound metabolism; protoporphyrin-IX biosynthesis; coproporphyrinogen-III from 5-aminolevulinate: step 2/4. Its function is as follows. Tetrapolymerization of the monopyrrole PBG into the hydroxymethylbilane pre-uroporphyrinogen in several discrete steps. This chain is Porphobilinogen deaminase, found in Enterobacter sp. (strain 638).